The primary structure comprises 209 residues: Uracil phosphoribosyltransferase (209 aa).

5-phospho-alpha-D-ribose 1-diphosphate contacts are provided by residues arginine 77, arginine 102, and 129 to 137 (DPMLATGVS). Uracil-binding positions include isoleucine 192 and 197-199 (GDA). Aspartate 198 contributes to the 5-phospho-alpha-D-ribose 1-diphosphate binding site.

Belongs to the UPRTase family. It depends on Mg(2+) as a cofactor.

The enzyme catalyses UMP + diphosphate = 5-phospho-alpha-D-ribose 1-diphosphate + uracil. It functions in the pathway pyrimidine metabolism; UMP biosynthesis via salvage pathway; UMP from uracil: step 1/1. Allosterically activated by GTP. Functionally, catalyzes the conversion of uracil and 5-phospho-alpha-D-ribose 1-diphosphate (PRPP) to UMP and diphosphate. The polypeptide is Uracil phosphoribosyltransferase (Metamycoplasma arthritidis (strain 158L3-1) (Mycoplasma arthritidis)).